We begin with the raw amino-acid sequence, 374 residues long: DNA-directed RNA polymerase subunit alpha (374 aa).

The tract at residues 1–257 (MSDNAHNLLY…KHFSIFENMD (257 aa)) is alpha N-terminal domain (alpha-NTD). Positions 274-374 (KDDILHKLIL…EKIRAKNIKG (101 aa)) are alpha C-terminal domain (alpha-CTD).

Belongs to the RNA polymerase alpha chain family. Homodimer. The RNAP catalytic core consists of 2 alpha, 1 beta, 1 beta' and 1 omega subunit. When a sigma factor is associated with the core the holoenzyme is formed, which can initiate transcription.

The enzyme catalyses RNA(n) + a ribonucleoside 5'-triphosphate = RNA(n+1) + diphosphate. Functionally, DNA-dependent RNA polymerase catalyzes the transcription of DNA into RNA using the four ribonucleoside triphosphates as substrates. The polypeptide is DNA-directed RNA polymerase subunit alpha (Chlamydia pneumoniae (Chlamydophila pneumoniae)).